The primary structure comprises 81 residues: MDTKVACLLLIILGALTVQGAVSGNKRINPLHARQWGEQCMNSMEEFCVPEYSECPPEYEPCREDKYCENDYYCCCRYSGY.

Residues 1–23 (MDTKVACLLLIILGALTVQGAVS) form the signal peptide. The propeptide occupies 24–25 (GN).

This sequence belongs to the Cnidaria small cysteine-rich protein (SCRiP) family. beta subfamily. Contains 4 disulfide bonds.

The protein localises to the secreted. Its subcellular location is the nematocyst. Its function is as follows. Induces neurotoxic symptoms on zebrafish. Has also been claimed to be implied in calcification, but tests on homolog proteins suggest that proteins of this family have a neurotoxic function and not a calcification function. This is Small cysteine-rich protein 6 from Orbicella faveolata (Mountainous star coral).